A 90-amino-acid chain; its full sequence is Small ribosomal subunit protein uS17m (90 aa).

Belongs to the universal ribosomal protein uS17 family. As to quaternary structure, component of the mitochondrial small ribosomal subunit (mt-SSU). Mature yeast 74S mitochondrial ribosomes consist of a small (37S) and a large (54S) subunit. The 37S small subunit contains a 15S ribosomal RNA (15S mt-rRNA) and at least 32 different proteins. The 54S large subunit contains a 21S rRNA (21S mt-rRNA) and at least 45 different proteins.

It localises to the mitochondrion. Its function is as follows. Component of the mitochondrial ribosome (mitoribosome), a dedicated translation machinery responsible for the synthesis of mitochondrial genome-encoded proteins, including at least some of the essential transmembrane subunits of the mitochondrial respiratory chain. The mitoribosomes are attached to the mitochondrial inner membrane and translation products are cotranslationally integrated into the membrane. uS17m may have a meiosis-specific role as it accumulates during the middle stage of sporulation. This Schizosaccharomyces pombe (strain 972 / ATCC 24843) (Fission yeast) protein is Small ribosomal subunit protein uS17m.